The primary structure comprises 369 residues: Peridinin-chlorophyll a-binding protein 2, chloroplastic (369 aa).

The N-terminal 56 residues, 1–56 (MVRSGKKAVVLATVAFCATSVVQKTCGFVPSPLRQRAAAAGAAASVATMFAPAAFA), are a transit peptide targeting the chloroplast. A run of 2 repeats spans residues 57–219 (DEIG…VPSG) and 220–369 (DTIG…AAQR).

Homotrimer.

The protein localises to the plastid. It is found in the chloroplast. Water-soluble antenna for capture of solar energy in the blue-green range. Peridinin is an asymmetric carotenoid. The protein is Peridinin-chlorophyll a-binding protein 2, chloroplastic of Amphidinium carterae (Dinoflagellate).